Reading from the N-terminus, the 259-residue chain is Global transcriptional regulator CodY (259 aa).

Residues 1 to 155 are GAF domain; it reads MSLLSRMRKI…GATVVGMEIL (155 aa). A DNA-binding region (H-T-H motif) is located at residues 203–222; sequence ASKIADRVGITRSVIVNALR. Serine 215 is subject to Phosphoserine.

It belongs to the CodY family.

The protein resides in the cytoplasm. DNA-binding global transcriptional regulator which is involved in the adaptive response to starvation and acts by directly or indirectly controlling the expression of numerous genes in response to nutrient availability. During rapid exponential growth, CodY is highly active and represses genes whose products allow adaptation to nutrient depletion. The protein is Global transcriptional regulator CodY of Halalkalibacterium halodurans (strain ATCC BAA-125 / DSM 18197 / FERM 7344 / JCM 9153 / C-125) (Bacillus halodurans).